Reading from the N-terminus, the 343-residue chain is Twinfilin (343 aa).

ADF-H domains lie at 4-139 and 177-312; these read QTGI…KHKV and GINC…EELH. A disordered region spans residues 314 to 343; that stretch reads RKLNLRPQFSKPKGPPSRGAKRLTKPQAVE.

It belongs to the actin-binding proteins ADF family. Twinfilin subfamily. As to quaternary structure, interacts with G-actin; ADP-actin form.

The protein localises to the cytoplasm. Its subcellular location is the cytoskeleton. The protein resides in the cell cortex. In terms of biological role, actin-binding protein involved in motile and morphological processes. Inhibits actin polymerization, likely by sequestering G-actin. This is Twinfilin (twf) from Anopheles gambiae (African malaria mosquito).